A 128-amino-acid chain; its full sequence is Glycine cleavage system H protein 2 (128 aa).

The Lipoyl-binding domain occupies 24 to 105 (TVTVGISDHA…PYSAWIFKVK (82 aa)). N6-lipoyllysine is present on lysine 65.

This sequence belongs to the GcvH family. The glycine cleavage system is composed of four proteins: P, T, L and H. It depends on (R)-lipoate as a cofactor.

The glycine cleavage system catalyzes the degradation of glycine. The H protein shuttles the methylamine group of glycine from the P protein to the T protein. The sequence is that of Glycine cleavage system H protein 2 from Pseudomonas syringae pv. tomato (strain ATCC BAA-871 / DC3000).